The sequence spans 317 residues: 17-beta-hydroxysteroid dehydrogenase type 6 (317 aa).

Residues 1-17 form the signal peptide; sequence MWLYLAVLLGLYYLLRW. NAD(+) is bound at residue 33–57; it reads FITGCDSGFGNQLARQLDLRGLRVL. N-linked (GlcNAc...) asparagine glycosylation is found at Asn-71 and Asn-161. Residue Ser-164 coordinates substrate. The Proton acceptor role is filled by Tyr-176.

The protein belongs to the short-chain dehydrogenases/reductases (SDR) family.

Its subcellular location is the microsome membrane. It is found in the endoplasmic reticulum membrane. The enzyme catalyses all-trans-retinol--[retinol-binding protein] + NAD(+) = all-trans-retinal--[retinol-binding protein] + NADH + H(+). The catalysed reaction is all-trans-retinol + NAD(+) = all-trans-retinal + NADH + H(+). It carries out the reaction androsterone + NAD(+) = 5alpha-androstan-3,17-dione + NADH + H(+). It catalyses the reaction testosterone + NAD(+) = androst-4-ene-3,17-dione + NADH + H(+). The enzyme catalyses 5alpha-androstane-3alpha,17beta-diol + NAD(+) = 17beta-hydroxy-5alpha-androstan-3-one + NADH + H(+). The catalysed reaction is 17beta-estradiol + NAD(+) = estrone + NADH + H(+). It carries out the reaction 17beta-estradiol + NADP(+) = estrone + NADPH + H(+). It catalyses the reaction 3alpha-hydroxy-5alpha-pregnan-20-one + NAD(+) = 5alpha-pregnane-3,20-dione + NADH + H(+). The enzyme catalyses 5alpha-androstane-3beta,17beta-diol + NAD(+) = 17beta-hydroxy-5alpha-androstan-3-one + NADH + H(+). The catalysed reaction is 3beta-hydroxy-5alpha-androstan-17-one + NAD(+) = 5alpha-androstan-3,17-dione + NADH + H(+). Functionally, NAD-dependent oxidoreductase with broad substrate specificity that shows both oxidative and reductive activity (in vitro). Has 17-beta-hydroxysteroid dehydrogenase activity towards various steroids (in vitro). Converts 5-alpha-androstan-3-alpha,17-beta-diol to androsterone and estradiol to estrone (in vitro). Has 3-alpha-hydroxysteroid dehydrogenase activity towards androsterone (in vitro). Has retinol dehydrogenase activity towards all-trans-retinol (in vitro). Can convert androsterone to epi-androsterone. Androsterone is first oxidized to 5-alpha-androstane-3,17-dione and then reduced to epi-andosterone. Can act on both C-19 and C-21 3-alpha-hydroxysteroids. The sequence is that of 17-beta-hydroxysteroid dehydrogenase type 6 (HSD17B6) from Bos taurus (Bovine).